Consider the following 279-residue polypeptide: MPPSNSTFDTCFHIHMVSDSTGETLMEVMRASVAQFEGTTPLEHLYALVRSSKQLDRVLDEVEAYPGVIMYTIVNADLRRELETRCVELGVPAIAILDPMLATLSAYLGRPVASRAGAQRSLDADYYRRIDALNYAMAHDDGQGDDFEGADIVLLGVSRTSKTPTSVYLAHRGFRAANIPLVKDVPIPEAVFSLRNPLVVGLTASPERIVQIRRNRLLSLNEDRDTNYIDDFAVREEILFAKRLYAKHKWPTIDVTRRSIEETAAKIINLLMEKRNMTV.

Residue 156 to 163 (GVSRTSKT) coordinates ADP.

Belongs to the pyruvate, phosphate/water dikinase regulatory protein family. PDRP subfamily.

The catalysed reaction is N(tele)-phospho-L-histidyl/L-threonyl-[pyruvate, phosphate dikinase] + ADP = N(tele)-phospho-L-histidyl/O-phospho-L-threonyl-[pyruvate, phosphate dikinase] + AMP + H(+). It carries out the reaction N(tele)-phospho-L-histidyl/O-phospho-L-threonyl-[pyruvate, phosphate dikinase] + phosphate + H(+) = N(tele)-phospho-L-histidyl/L-threonyl-[pyruvate, phosphate dikinase] + diphosphate. Functionally, bifunctional serine/threonine kinase and phosphorylase involved in the regulation of the pyruvate, phosphate dikinase (PPDK) by catalyzing its phosphorylation/dephosphorylation. The sequence is that of Putative pyruvate, phosphate dikinase regulatory protein from Maricaulis maris (strain MCS10) (Caulobacter maris).